Consider the following 329-residue polypeptide: DNA-directed RNA polymerase subunit alpha (329 aa).

Residues 1–234 (MQGSVTEFLK…EQLDAFVELR (234 aa)) are alpha N-terminal domain (alpha-NTD). An alpha C-terminal domain (alpha-CTD) region spans residues 248 to 329 (FDPILLRPVD…WPPASLIDND (82 aa)).

Belongs to the RNA polymerase alpha chain family. In terms of assembly, homodimer. The RNAP catalytic core consists of 2 alpha, 1 beta, 1 beta' and 1 omega subunit. When a sigma factor is associated with the core the holoenzyme is formed, which can initiate transcription.

It carries out the reaction RNA(n) + a ribonucleoside 5'-triphosphate = RNA(n+1) + diphosphate. DNA-dependent RNA polymerase catalyzes the transcription of DNA into RNA using the four ribonucleoside triphosphates as substrates. The chain is DNA-directed RNA polymerase subunit alpha from Idiomarina loihiensis (strain ATCC BAA-735 / DSM 15497 / L2-TR).